Here is a 352-residue protein sequence, read N- to C-terminus: NADP-dependent oxidoreductase RED1 (352 aa).

NADP(+) contacts are provided by residues 166–169, K192, Y208, N231, and 285–287; these read GAVG and FIV.

It belongs to the NADP-dependent oxidoreductase L4BD family.

It functions in the pathway mycotoxin biosynthesis. Its function is as follows. NADP-dependent oxidoreductase; part of the Tox1B locus, one of the 2 loci that mediate the biosynthesis of T-toxin, a family of linear polyketides 37 to 45 carbons in length, of which the major component is 41 carbons, and which leads to high virulence to maize. One of the PKSs (PKS1 or PKS2) could synthesize a precursor, used subsequently by the other PKS as starter unit, to add additional carbons. Variability in the length of the final carbon backbone C35-47 could be achieved by varying the number of condensation cycles, or use of different starter or extender units or might be due to decarboxylation of the penultimate product, catalyzed by DEC1. Additional proteins are required for the biosynthesis of T-toxin, including oxidoreductases RED1, RED2, RED3, LAM1 and OXI1, as well as esterase TOX9. This chain is NADP-dependent oxidoreductase RED1, found in Cochliobolus heterostrophus (strain C4 / ATCC 48331 / race T) (Southern corn leaf blight fungus).